We begin with the raw amino-acid sequence, 1020 residues long: LLGL scribble cell polarity complex component 2 (1020 aa).

14 WD repeats span residues 36–69 (SALGYSPSLRILAIGTRSGAIKLYGAPGVEFMGL), 76–117 (VTQI…DESF), 132–169 (ITVVLPHSSCELLYLGTESGNVFVVQLPAFRALEDRTI), 193–227 (ALQEHPRDPNQILIGYSRGLVVIWDLQGSRVLYHF), 233–268 (LENIWWQRDGRLLVSCHSDGSYCQWPVSSEAQQPEP), 282–324 (AITR…GQQT), 332–366 (VIGFTVLTEADPAATFDDPYALVVLAEEELVVIDL), 388–464 (TCSH…YKLS), 508–583 (QKIF…FVLV), 592–653 (TSLA…LRQS), 713–769 (VRTL…KEIQ), 778–830 (GILV…VSAK), 835–888 (LTAL…VRYS), and 902–925 (VFTKYGQGFYLISPSEFERFSLST). Ser653 is subject to Phosphoserine. Basic residues predominate over residues 653–669 (SFRRMRRSRVSSRKRHP). A disordered region spans residues 653–689 (SFRRMRRSRVSSRKRHPAGPPGEAQEGSAKAERPGLQ). Disordered regions lie at residues 938 to 975 (AETKNHRPGNGAGPKKAPSRARNSGTQSDGEEKQPGLV) and 992 to 1020 (STLEGDRGSGNWRSHRAAVGCSLSNGGAE). Residues Ser965 and Ser1015 each carry the phosphoserine modification.

The protein belongs to the WD repeat L(2)GL family. Interacts with GPSM2/LGN, PRKCI/aPKC and PARD6B/Par-6. The complex is enhanced during mitosis. Interacts with DCAF1. In terms of processing, phosphorylated at Ser-653 by PRKCI. Phosphorylation is enhanced during cell polarization induced by calcium. Phosphorylation may occur during the cell-cell contact-induced cell polarization and may contribute to the segregation of LLGL2 from the PRKCI/aPKC and PARD6B/Par-6 complex.

Its subcellular location is the cytoplasm. Part of a complex with GPSM2/LGN, PRKCI/aPKC and PARD6B/Par-6, which may ensure the correct organization and orientation of bipolar spindles for normal cell division. This complex plays roles in the initial phase of the establishment of epithelial cell polarity. In Homo sapiens (Human), this protein is LLGL scribble cell polarity complex component 2 (LLGL2).